We begin with the raw amino-acid sequence, 132 residues long: NADH-quinone oxidoreductase subunit A (132 aa).

3 consecutive transmembrane segments (helical) span residues 14 to 34 (FFTFFFIAVSICVFMLSISWI), 66 to 86 (FYLVAIYFVLFDVEALYLYAW), and 96 to 116 (IGFIEALIFILFLLSGLIYLI).

This sequence belongs to the complex I subunit 3 family. In terms of assembly, NDH-1 is composed of 13 different subunits. Subunits NuoA, H, J, K, L, M, N constitute the membrane sector of the complex.

The protein resides in the cell membrane. The catalysed reaction is a quinone + NADH + 5 H(+)(in) = a quinol + NAD(+) + 4 H(+)(out). Its function is as follows. NDH-1 shuttles electrons from NADH, via FMN and iron-sulfur (Fe-S) centers, to quinones in the respiratory chain. The immediate electron acceptor for the enzyme in this species is believed to be ubiquinone. Couples the redox reaction to proton translocation (for every two electrons transferred, four hydrogen ions are translocated across the cytoplasmic membrane), and thus conserves the redox energy in a proton gradient. The sequence is that of NADH-quinone oxidoreductase subunit A from Buchnera aphidicola subsp. Baizongia pistaciae (strain Bp).